Consider the following 144-residue polypeptide: Arsenate reductase ArsI1 (144 aa).

C14 serves as the catalytic Nucleophile; cysteine thioarsenate intermediate.

It belongs to the ArsC family.

The enzyme catalyses [glutaredoxin]-dithiol + arsenate + glutathione + H(+) = glutathionyl-S-S-[glutaredoxin] + arsenite + H2O. In terms of biological role, catalyzes the reduction of arsenate [As(V)] to arsenite [As(III)]. Does not constitute the major arsenate reductase in cells: essential only in the absence of ArsC (AC P74313). The sequence is that of Arsenate reductase ArsI1 from Synechocystis sp. (strain ATCC 27184 / PCC 6803 / Kazusa).